Reading from the N-terminus, the 187-residue chain is UPF0301 protein plu1183 (187 aa).

The protein belongs to the UPF0301 (AlgH) family.

The sequence is that of UPF0301 protein plu1183 from Photorhabdus laumondii subsp. laumondii (strain DSM 15139 / CIP 105565 / TT01) (Photorhabdus luminescens subsp. laumondii).